Here is a 261-residue protein sequence, read N- to C-terminus: tRNA pseudouridine synthase A (261 aa).

Asp51 acts as the Nucleophile in catalysis. Substrate is bound at residue Tyr109.

The protein belongs to the tRNA pseudouridine synthase TruA family. In terms of assembly, homodimer.

It carries out the reaction uridine(38/39/40) in tRNA = pseudouridine(38/39/40) in tRNA. Its function is as follows. Formation of pseudouridine at positions 38, 39 and 40 in the anticodon stem and loop of transfer RNAs. This is tRNA pseudouridine synthase A from Shewanella baltica (strain OS155 / ATCC BAA-1091).